A 351-amino-acid chain; its full sequence is Protein RecA (351 aa).

Position 67–74 (67–74) interacts with ATP; that stretch reads GPESSGKT.

This sequence belongs to the RecA family.

It is found in the cytoplasm. Can catalyze the hydrolysis of ATP in the presence of single-stranded DNA, the ATP-dependent uptake of single-stranded DNA by duplex DNA, and the ATP-dependent hybridization of homologous single-stranded DNAs. It interacts with LexA causing its activation and leading to its autocatalytic cleavage. The protein is Protein RecA of Arthrobacter sp. (strain FB24).